The primary structure comprises 375 residues: Anhydro-N-acetylmuramic acid kinase (375 aa).

14–21 (GTSMDGAD) contacts ATP.

Belongs to the anhydro-N-acetylmuramic acid kinase family.

It carries out the reaction 1,6-anhydro-N-acetyl-beta-muramate + ATP + H2O = N-acetyl-D-muramate 6-phosphate + ADP + H(+). It participates in amino-sugar metabolism; 1,6-anhydro-N-acetylmuramate degradation. The protein operates within cell wall biogenesis; peptidoglycan recycling. Its function is as follows. Catalyzes the specific phosphorylation of 1,6-anhydro-N-acetylmuramic acid (anhMurNAc) with the simultaneous cleavage of the 1,6-anhydro ring, generating MurNAc-6-P. Is required for the utilization of anhMurNAc either imported from the medium or derived from its own cell wall murein, and thus plays a role in cell wall recycling. In Cupriavidus pinatubonensis (strain JMP 134 / LMG 1197) (Cupriavidus necator (strain JMP 134)), this protein is Anhydro-N-acetylmuramic acid kinase.